A 509-amino-acid polypeptide reads, in one-letter code: Heat shock 70 kDa protein 14 (509 aa).

Belongs to the heat shock protein 70 family. Component of ribosome-associated complex (RAC), a heterodimer composed of Hsp70/DnaK-type chaperone HSPA14 and Hsp40/DnaJ-type chaperone DNAJC2.

It is found in the cytoplasm. Its subcellular location is the cytosol. Component of the ribosome-associated complex (RAC), a complex involved in folding or maintaining nascent polypeptides in a folding-competent state. In the RAC complex, binds to the nascent polypeptide chain, while DNAJC2 stimulates its ATPase activity. The chain is Heat shock 70 kDa protein 14 (HSPA14) from Bos taurus (Bovine).